The sequence spans 103 residues: MQPNDITFFQRFQNDILTGRKTITIRDASESHFKAGDVLRVGRFEDDGYFCTIEVTGTSTVTLDTLNEKHAQQENMSLDELKRVIAEIYPNQMQFYVIDFKCL.

Positions 6–100 (ITFFQRFQND…NQMQFYVIDF (95 aa)) constitute an ASCH domain. Catalysis depends on Lys21, which acts as the Proton acceptor. Thr24 acts as the Nucleophile in catalysis. The active-site Proton donor is Glu74.

The protein belongs to the N(4)-acetylcytidine amidohydrolase family.

The catalysed reaction is N(4)-acetylcytidine + H2O = cytidine + acetate + H(+). The enzyme catalyses N(4)-acetyl-2'-deoxycytidine + H2O = 2'-deoxycytidine + acetate + H(+). It carries out the reaction N(4)-acetylcytosine + H2O = cytosine + acetate + H(+). Its function is as follows. Catalyzes the hydrolysis of N(4)-acetylcytidine (ac4C). In Salmonella arizonae (strain ATCC BAA-731 / CDC346-86 / RSK2980), this protein is N(4)-acetylcytidine amidohydrolase (yqfB).